Here is a 276-residue protein sequence, read N- to C-terminus: Aldo-keto reductase Mkms_1985 (276 aa).

Tyrosine 50 functions as the Proton donor in the catalytic mechanism. Residues leucine 190, isoleucine 228, lysine 230, serine 231, valine 232, arginine 236, serine 239, and asparagine 240 each coordinate NADPH. Residues 257 to 276 (SSLEDGSRLGPDPKTFNFTG) are disordered.

It belongs to the aldo/keto reductase family.

This is Aldo-keto reductase Mkms_1985 from Mycobacterium sp. (strain KMS).